A 233-amino-acid polypeptide reads, in one-letter code: Superoxide dismutase [Mn] 3.4, mitochondrial (233 aa).

A mitochondrion-targeting transit peptide spans 1-29 (MALRTLASKNALSFALGGAARPSAASARG). Residues His57, His105, Asp194, and His198 each contribute to the Mn(2+) site.

Belongs to the iron/manganese superoxide dismutase family. As to quaternary structure, homotetramer. It depends on Mn(2+) as a cofactor.

Its subcellular location is the mitochondrion matrix. It catalyses the reaction 2 superoxide + 2 H(+) = H2O2 + O2. Destroys superoxide anion radicals which are normally produced within the cells and which are toxic to biological systems. This chain is Superoxide dismutase [Mn] 3.4, mitochondrial (SODA.3), found in Zea mays (Maize).